The chain runs to 119 residues: Large ribosomal subunit protein bL20 (119 aa).

It belongs to the bacterial ribosomal protein bL20 family.

Its function is as follows. Binds directly to 23S ribosomal RNA and is necessary for the in vitro assembly process of the 50S ribosomal subunit. It is not involved in the protein synthesizing functions of that subunit. The protein is Large ribosomal subunit protein bL20 of Methylocella silvestris (strain DSM 15510 / CIP 108128 / LMG 27833 / NCIMB 13906 / BL2).